A 595-amino-acid chain; its full sequence is Protein halfway (595 aa).

2 disordered regions span residues 1 to 42 (MLLT…ADDE) and 64 to 98 (TGAA…PLLP). N-linked (GlcNAc...) asparagine glycans are attached at residues Asn-250 and Asn-255. The LRRNT domain occupies 347–402 (ESTKRCMTKCPVIPNYGSCKCRFESIMIIQDDQSKPKCHVDCSNLGLVELPPRLPD). 3 LRR repeats span residues 403-424 (NTFV…FQTN), 429-450 (NINR…EGTK), and 454-475 (NFQR…FLNN). Positions 489-538 (NKLQCDCNSAKTLQNWLKERSTDIPDYMEIRCRNIPQSVIELQEAKLCQS) constitute an LRRCT domain.

In terms of biological role, has a role in the ecdysone induced cascade; probably indirect control of 'late' ecdysone genes. The protein is Protein halfway (hfw) of Drosophila pseudoobscura pseudoobscura (Fruit fly).